The primary structure comprises 385 residues: METKRVEIPGSVLDDLCSRFILHIPSEERDNAIRVCFQIELAHWFYLDFYMQNTPGLSQCGIRDFAKAVFSHCPFLLPEGEDVEKVLDEWKEYKMGVPTYGAIILDETLENVLLVQGYLAKSGWGFPKGKVNKEEAPHDCAAREVFEETGFDIKDYICKDDYIELRINDQLARLYIIPGIPKDTKFNPKTRREIRNIEWFSIEKLPCHRNDMTPKSKLGLAPNKFFMAIPFIRPLRDWLSRRFGDSSDSDNGFSSTGSTPAKPTVEKLSRTKFRHSQQLFPDGSPGDQWVKHRQPLQQKPYNNHSEMSDLLKGKKCEKKLHPRKLQDNFETDAVYDLPSSNEDQLLEHAEGQPVACNGHCKFPFSSRAFLSFKFDHNAIMKILDL.

Positions M95–F226 constitute a Nudix hydrolase domain. The Nudix box motif lies at G129 to G150. Residues E144 and E148 each contribute to the Mn(2+) site. Phosphoserine is present on residues S246, S247, S249, S276, and S284. The disordered stretch occupies residues S247–E266. Over residues S249–T259 the composition is skewed to low complexity.

It belongs to the Nudix hydrolase family. DCP2 subfamily. Found in a mRNA decay complex with LSM1, LSM3, LSM4, EXOSC2, EXOSC4, EXOSC10, PARN, XRN1, CNOT6, UPF1, UPF2 and UPF3B. Forms a complex with DCP1A, EDC3, DDX6 and EDC4/HEDLS, within this complex directly interacts with EDC4/HEDLS. Interacts with DPC1B, UPF1, UPF2 and UPF3B. Associates with polysomes. Interacts (via N-terminus and C-terminus) with TRIM21 (via N-terminus and C-terminus). Interacts with LIMD1, WTIP and AJUBA. Interacts with DDX17 in an RNA-dependent manner. Interacts with ZC3HAV1. Interacts with APOBEC3G in an RNA-dependent manner. Interacts with ZFP36L1 (via N-terminus). Interacts with NBDY. It depends on Mn(2+) as a cofactor. Mg(2+) serves as cofactor.

The protein localises to the cytoplasm. It localises to the P-body. Its subcellular location is the nucleus. The catalysed reaction is a 5'-end (N(7)-methyl 5'-triphosphoguanosine)-ribonucleoside in mRNA + H2O = N(7)-methyl-GDP + a 5'-end phospho-ribonucleoside in mRNA + 2 H(+). Its function is as follows. Decapping metalloenzyme that catalyzes the cleavage of the cap structure on mRNAs. Removes the 7-methyl guanine cap structure from mRNA molecules, yielding a 5'-phosphorylated mRNA fragment and 7m-GDP. Necessary for the degradation of mRNAs, both in normal mRNA turnover and in nonsense-mediated mRNA decay. Plays a role in replication-dependent histone mRNA degradation. Has higher activity towards mRNAs that lack a poly(A) tail. Has no activity towards a cap structure lacking an RNA moiety. The presence of a N(6)-methyladenosine methylation at the second transcribed position of mRNAs (N(6),2'-O-dimethyladenosine cap; m6A(m)) provides resistance to DCP2-mediated decapping. Blocks autophagy in nutrient-rich conditions by repressing the expression of ATG-related genes through degradation of their transcripts. This is m7GpppN-mRNA hydrolase (DCP2) from Pongo abelii (Sumatran orangutan).